The sequence spans 186 residues: Holliday junction branch migration complex subunit RuvA (186 aa).

Residues 1–61 are domain I; sequence MYSYIKGKVV…ENLQILYGFN (61 aa). The segment at 62–134 is domain II; sequence DNKNLLFFKK…LKGDLIFSEK (73 aa). The flexible linker stretch occupies residues 134-135; it reads KI. The segment at 136–186 is domain III; the sequence is ILNPKKTELEKILLNLGFVKKEIKSVLNQIDDKKELELMLKEVLLKLAKNI.

The protein belongs to the RuvA family. Homotetramer. Forms an RuvA(8)-RuvB(12)-Holliday junction (HJ) complex. HJ DNA is sandwiched between 2 RuvA tetramers; dsDNA enters through RuvA and exits via RuvB. An RuvB hexamer assembles on each DNA strand where it exits the tetramer. Each RuvB hexamer is contacted by two RuvA subunits (via domain III) on 2 adjacent RuvB subunits; this complex drives branch migration. In the full resolvosome a probable DNA-RuvA(4)-RuvB(12)-RuvC(2) complex forms which resolves the HJ.

It localises to the cytoplasm. Its function is as follows. The RuvA-RuvB-RuvC complex processes Holliday junction (HJ) DNA during genetic recombination and DNA repair, while the RuvA-RuvB complex plays an important role in the rescue of blocked DNA replication forks via replication fork reversal (RFR). RuvA specifically binds to HJ cruciform DNA, conferring on it an open structure. The RuvB hexamer acts as an ATP-dependent pump, pulling dsDNA into and through the RuvAB complex. HJ branch migration allows RuvC to scan DNA until it finds its consensus sequence, where it cleaves and resolves the cruciform DNA. This chain is Holliday junction branch migration complex subunit RuvA, found in Phytoplasma mali (strain AT).